We begin with the raw amino-acid sequence, 345 residues long: Prenyltransferase ltmC (345 aa).

His-112 is a substrate binding site. Residues Asp-119 and Asp-123 each contribute to the Mg(2+) site. Residue Arg-128 participates in substrate binding. An N-linked (GlcNAc...) asparagine glycan is attached at Asn-130. Substrate is bound by residues Lys-212, Thr-213, Gln-243, Asn-250, and Lys-260.

It belongs to the FPP/GGPP synthase family. It depends on Mg(2+) as a cofactor.

Its pathway is secondary metabolite biosynthesis. Prenyltransferase; part of the gene cluster that mediates the biosynthesis of lolitrems, indole-diterpene mycotoxins that are potent tremorgens in mammals, and are synthesized by clavicipitaceous fungal endophytes in association with their grass hosts. The geranylgeranyl diphosphate (GGPP) synthase ltmG is proposed to catalyze the first step in lolitrem biosynthesis. LtmG catalyzes a series of iterative condensations of isopentenyl diphosphate (IPP) with dimethylallyl diphosphate (DMAPP), geranyl diphosphate (GPP), and farnesyl diphosphate (FPP), to form GGPP. GGPP then condenses with indole-3-glycerol phosphate to form 3-geranylgeranylindole, an acyclic intermediate, to be incorporated into paxilline. Either ltmG or ltmC could be responsible for this step, as both are putative prenyl transferases. The FAD-dependent monooxygenase ltmM then catalyzes the epoxidation of the two terminal alkenes of the geranylgeranyl moiety, which is subsequently cyclized by ltmB, to paspaline. The cytochrome P450 monooxygenases ltmQ and ltmP can sequentially oxidize paspaline to terpendole E and terpendole F. Alternatively, ltmP converts paspaline to an intermediate which is oxidized by ltmQ to terpendole F. LtmF, ltmK, ltmE and ltmJ appear to be unique to the epichloe endophytes. The prenyltransferase ltmF is involved in the 27-hydroxyl-O-prenylation. The cytochrome P450 monooxygenase ltmK is required for the oxidative acetal ring formation. The multi-functional prenyltransferase ltmE is required for C20- and C21-prenylations of the indole ring of paspalanes and acts together with the cytochrome P450 monooxygenase ltmJ to yield lolitremanes by multiple oxidations and ring closures. The stereoisomer pairs of lolitriol and lolitrem N or lolitrem B and lolitrem F may be attributed to variations in the way in which ring closure can occur under the action of ltmJ. While the major product of this pathway is lolitrem B, the prenyl transferases and cytochrome P450 monooxygenases identified in this pathway have a remarkable versatility in their regio- and stereo-specificities to generate a diverse range of metabolites that are products of a metabolic grid rather than a linear pathway. The polypeptide is Prenyltransferase ltmC (Epichloe festucae var. lolii (Neotyphodium lolii)).